The primary structure comprises 254 residues: AA9 family lytic polysaccharide monooxygenase A (254 aa).

An N-terminal signal peptide occupies residues 1–19 (MKYSILGLTALSFVASAAA). Cu(2+) is bound at residue His-20. Methylhistidine is present on His-20. Val-28 lines the (1,4-beta-D-glucosyl)n pocket. Asn-52 is a glycosylation site (N-linked (GlcNAc...) asparagine). Cys-60 and Cys-186 are oxidised to a cystine. Positions 66, 67, 77, and 86 each coordinate (1,4-beta-D-glucosyl)n. A Cu(2+)-binding site is contributed by His-97. N-linked (GlcNAc...) asparagine glycosylation occurs at Asn-129. (1,4-beta-D-glucosyl)n contacts are provided by Val-148 and Arg-159. Positions 166 and 181 each coordinate O2. Tyr-183 provides a ligand contact to Cu(2+).

This sequence belongs to the polysaccharide monooxygenase AA9 family. Requires Cu(2+) as cofactor. The catalytically essential N-terminal histidine His-20 is post-translationally modified by methylation to prevent protonation of the histidine side chain, and protect the critical active site of the enzyme from oxidative damage.

The protein resides in the secreted. It carries out the reaction [(1-&gt;4)-beta-D-glucosyl]n+m + reduced acceptor + O2 = 4-dehydro-beta-D-glucosyl-[(1-&gt;4)-beta-D-glucosyl]n-1 + [(1-&gt;4)-beta-D-glucosyl]m + acceptor + H2O.. The polyphenol cinnamtannin B1 contained in methanolic extract of Cinnamomum cassia (cinnamon) acts as an inhibitor of catalytic activity. Functionally, lytic polysaccharide monooxygenase (LPMO) that depolymerizes crystalline and amorphous polysaccharides via the oxidation of scissile alpha- or beta-(1-4)-glycosidic bonds, yielding C1 or C4 oxidation product. Catalysis by LPMOs requires the reduction of the active-site copper from Cu(II) to Cu(I) by a reducing agent and H(2)O(2) or O(2) as a cosubstrate. Is able to cleave phosphoric acid swollen cellulose (PASC) in the presence of a reducing agent, yielding a range of cellooligosaccharides dominated by cellobiose and cellotriose. Activity is less sensitive to the reducing agent potential when cleaving xylan, suggesting that distinct catalytic mechanisms exist for xylan and glucan cleavage. This chain is AA9 family lytic polysaccharide monooxygenase A, found in Panus similis (Lentinoid fungus).